A 386-amino-acid polypeptide reads, in one-letter code: S-adenosylmethionine synthase (386 aa).

Residue His-16 coordinates ATP. A Mg(2+)-binding site is contributed by Asp-18. Glu-44 contacts K(+). L-methionine is bound by residues Glu-57 and Gln-100. Residues Gln-100–Arg-110 form a flexible loop region. ATP is bound by residues Asp-165 to Lys-167, Asp-240, Arg-246 to Lys-247, Ala-263, and Lys-267. Asp-240 provides a ligand contact to L-methionine. L-methionine is bound at residue Lys-271.

It belongs to the AdoMet synthase family. Homotetramer; dimer of dimers. It depends on Mg(2+) as a cofactor. K(+) is required as a cofactor.

Its subcellular location is the cytoplasm. It catalyses the reaction L-methionine + ATP + H2O = S-adenosyl-L-methionine + phosphate + diphosphate. It participates in amino-acid biosynthesis; S-adenosyl-L-methionine biosynthesis; S-adenosyl-L-methionine from L-methionine: step 1/1. Catalyzes the formation of S-adenosylmethionine (AdoMet) from methionine and ATP. The overall synthetic reaction is composed of two sequential steps, AdoMet formation and the subsequent tripolyphosphate hydrolysis which occurs prior to release of AdoMet from the enzyme. The sequence is that of S-adenosylmethionine synthase from Francisella philomiragia subsp. philomiragia (strain ATCC 25017 / CCUG 19701 / FSC 153 / O#319-036).